A 58-amino-acid polypeptide reads, in one-letter code: UPF0391 membrane protein Patl_4137 (58 aa).

Transmembrane regions (helical) follow at residues 4–24 and 27–47; these read WALTFLIIAILAGVMGFGGIA and AAGIAKIIFFVFLVLLVLSLV.

Belongs to the UPF0391 family.

It localises to the cell membrane. This Pseudoalteromonas atlantica (strain T6c / ATCC BAA-1087) protein is UPF0391 membrane protein Patl_4137.